The following is a 1142-amino-acid chain: Envelopment polyprotein (1142 aa).

A signal peptide spans 1–21 (MSKFCLCLSLLGVLLLQVCDT). At 22 to 489 (RSLLELKIEC…LCVPGIHGWS (468 aa)) the chain is on the lumenal side. Intrachain disulfides connect C31-C156, C65-C162, C114-C133, C138-C143, C180-C190, and C215-C253. An N-linked (GlcNAc...) asparagine; by host glycan is attached at N139. The N-linked (GlcNAc...) asparagine; by host glycan is linked to N353. 4 disulfide bridges follow: C382–C441, C386–C395, C411–C430, and C458–C481. N405 is a glycosylation site (N-linked (GlcNAc...) asparagine; by host). Residues 490–510 (TIALLATFCFGWLLIPIISLV) traverse the membrane as a helical segment. Topologically, residues 511 to 633 (SIKIMLLFAY…LSVFRYRSRC (123 aa)) are cytoplasmic. The binding to the ribonucleoprotein stretch occupies residues 522–539 (CSKYSNDSKFRLLIEKVK). CCHC-type zinc fingers lie at residues 551-571 (CEVCQQECEMAKELESHKKSC) and 576-597 (CPYCMNPTESTESALQAHFKVC). Binding to the ribonucleoprotein stretches follow at residues 594-611 (FKVCKLTTRFQENLRKSL), 598-609 (KLTTRFQENLRK), and 617-631 (KRGCYRTLSVFRYRS). One can recognise an ITAM domain in the interval 617–640 (KRGCYRTLSVFRYRSRCFVGLVWC). A YxxL motif is present at residues 621–624 (YRTL). The helical transmembrane segment at 634–654 (FVGLVWCILLVLELVIWAASA) threads the bilayer. Over 655–1110 (DTVEIKTGWT…EWLMGILSGN (456 aa)) the chain is Lumenal. Cystine bridges form between C741–C776, C745–C783, C757–C890, C771–C901, C786–C909, C812–C821, C829–C838, and C869–C873. A fusion loop region spans residues 763 to 783 (YEFETGWGCNPGDCPGVGTGC). The N-linked (GlcNAc...) asparagine; by host glycan is linked to N933. Intrachain disulfides connect C975–C1005, C998–C1050, C1015–C1020, C1051–C1056, and C1090–C1094. A helical membrane pass occupies residues 1111-1131 (WMVVAVLVVLLILSIFLFSLC). The tract at residues 1127 to 1142 (LFSLCCPRRVVHKKSS) is binding to the ribonucleoprotein. Residues 1132–1142 (CPRRVVHKKSS) are Cytoplasmic-facing.

Belongs to the hantavirus envelope glycoprotein family. As to quaternary structure, homodimer. Homotetramer; forms heterotetrameric Gn-Gc spikes in the pre-fusion conformation. Interacts (via C-terminus) with the nucleoprotein. Interacts with host TUFM; this interaction contributes to the virus-induced degradation of mitochondria by autophagy, which leads to degradation of host MAVS and inhibition of type I interferon (IFN) responses. Interacts with host MAP1LC3B; this interaction contributes to the virus-induced degradation of mitochondria by autophagy, which leads to degradation of host MAVS and inhibition of type I interferon (IFN) responses. Homodimer. Homotetramer; forms heterotetrameric Gn-Gc spikes in the pre-fusion conformation. Homotrimer; forms homotrimer in the post-fusion conformation at acidic pH. Interacts (via C-terminus) with the nucleoprotein. In terms of processing, envelope polyprotein precursor is quickly cleaved in vivo just after synthesis, presumably by host signal peptidase.

Its subcellular location is the virion membrane. The protein localises to the host cell surface. It localises to the host Golgi apparatus membrane. It is found in the host endoplasmic reticulum membrane. The protein resides in the host mitochondrion. Functionally, forms homotetramers with glycoprotein C at the surface of the virion. Attaches the virion to host cell receptors including integrin alpha5/ITGB1. This attachment induces virion internalization predominantly through clathrin-dependent endocytosis. Mediates the assembly and budding of infectious virus particles through its interaction with the nucleocapsid protein and the viral genome. May dysregulate normal immune and endothelial cell responses through an ITAM motif. Translocates to mitochondria, binds to host TUFM and recruits MAP1LC3B. These interactions induce mitochondrial autophagy and therefore destruction of host MAVS leading to inhibition of type I interferon (IFN) responses. Concomitant breakdown of glycoprotein N is apparently prevented by the nucleoprotein that may inhibit Gn-stimulated autophagosome-lysosome fusion. Interacts with the viral genomic RNA. Its function is as follows. Forms homotetramers with glycoprotein N at the surface of the virion. Attaches the virion to host cell receptors including integrin ITGAV/ITGB3. This attachment induces virion internalization predominantly through clathrin-dependent endocytosis. Class II fusion protein that promotes fusion of viral membrane with host endosomal membrane after endocytosis of the virion. This Microtus pennsylvanicus (Meadow vole) protein is Envelopment polyprotein (GP).